The sequence spans 178 residues: Probable DNA-directed RNA polymerase subunit delta (178 aa).

The region spanning 14–81 (LSLIDVAHFI…GNNTWGLRAW (68 aa)) is the HTH HARE-type domain. Disordered regions lie at residues 89–122 (EEVQTQTTPKKKRKSDDDDDEDEEILDDDVDYDD) and 141–178 (LDEDEDDDDHLPDGIEGDLATVEDDYTDGDYTEDPEDK). Composition is skewed to acidic residues over residues 105–122 (DDDDEDEEILDDDVDYDD), 141–150 (LDEDEDDDDH), and 161–178 (TVEDDYTDGDYTEDPEDK).

Belongs to the RpoE family. As to quaternary structure, RNAP is composed of a core of 2 alpha, a beta and a beta' subunits. The core is associated with a delta subunit and one of several sigma factors.

Its function is as follows. Participates in both the initiation and recycling phases of transcription. In the presence of the delta subunit, RNAP displays an increased specificity of transcription, a decreased affinity for nucleic acids, and an increased efficiency of RNA synthesis because of enhanced recycling. The polypeptide is Probable DNA-directed RNA polymerase subunit delta (Listeria innocua serovar 6a (strain ATCC BAA-680 / CLIP 11262)).